The following is a 595-amino-acid chain: S-(+)-linalool synthase, chloroplastic (595 aa).

A chloroplast-targeting transit peptide spans 1-46; the sequence is MVCHVFSSFSSSLIRVLEAPLLLPAASASSSSSSSPASRSGGRRRR. Residues 27–40 show a composition bias toward low complexity; the sequence is SASSSSSSSPASRS. Residues 27–54 are disordered; the sequence is SASSSSSSSPASRSGGRRRRAAHVRPSP. (2E)-geranyl diphosphate-binding residues include Arg-309, Asp-346, Asp-350, Arg-487, and Asp-490. 2 residues coordinate Mg(2+): Asp-346 and Asp-350. The DDXXD motif motif lies at 346–350; sequence DDIFD. Mg(2+) contacts are provided by Asp-490, Ser-494, and Glu-498.

It belongs to the terpene synthase family. Tpsb subfamily. Requires Mg(2+) as cofactor. It depends on Mn(2+) as a cofactor.

The protein resides in the plastid. It localises to the chloroplast. It carries out the reaction (2E)-geranyl diphosphate + H2O = (S)-linalool + diphosphate. Its pathway is secondary metabolite biosynthesis; terpenoid biosynthesis. Its function is as follows. Involved in monoterpene (C10) biosynthesis. The major product is S-(+)-linalool. Linalool production is induced by jasmonate in response to pathogen attack, it possesses antibacterial activity and is important for resistance to the bacterial blight pathogen Xanthomonas oryzae pv. oryzae (Xoo). Plants over-expressing linalool synthase display enhanced resistance to Xoo. In Oryza sativa subsp. japonica (Rice), this protein is S-(+)-linalool synthase, chloroplastic.